The chain runs to 163 residues: Phosphopantetheine adenylyltransferase (163 aa).

Ser-9 is a binding site for substrate. ATP is bound by residues Ser-9–Phe-10 and His-17. Residues Lys-41, Ile-75, and Arg-89 each coordinate substrate. ATP-binding positions include Gly-90–Arg-92, Glu-100, and His-125–Asp-131.

The protein belongs to the bacterial CoaD family. In terms of assembly, homohexamer. It depends on Mg(2+) as a cofactor.

It is found in the cytoplasm. It carries out the reaction (R)-4'-phosphopantetheine + ATP + H(+) = 3'-dephospho-CoA + diphosphate. The protein operates within cofactor biosynthesis; coenzyme A biosynthesis; CoA from (R)-pantothenate: step 4/5. In terms of biological role, reversibly transfers an adenylyl group from ATP to 4'-phosphopantetheine, yielding dephospho-CoA (dPCoA) and pyrophosphate. In Borrelia garinii subsp. bavariensis (strain ATCC BAA-2496 / DSM 23469 / PBi) (Borreliella bavariensis), this protein is Phosphopantetheine adenylyltransferase.